The chain runs to 172 residues: Large ribosomal subunit protein uL10 (172 aa).

It belongs to the universal ribosomal protein uL10 family. In terms of assembly, part of the ribosomal stalk of the 50S ribosomal subunit. The N-terminus interacts with L11 and the large rRNA to form the base of the stalk. The C-terminus forms an elongated spine to which L12 dimers bind in a sequential fashion forming a multimeric L10(L12)X complex.

In terms of biological role, forms part of the ribosomal stalk, playing a central role in the interaction of the ribosome with GTP-bound translation factors. This Clostridium tetani (strain Massachusetts / E88) protein is Large ribosomal subunit protein uL10.